The sequence spans 134 residues: MSVSNDLIWQVIRDNNRFLVKRPEFGGIQFNREPVNVSGKNAQRFSGLCNDKAVGVQANSPRGVVLITKTNPKNAQKPAKLFRKDVIANASSRKTYKSIAGRIGRTGYRDDLVKVSVARASAILSSQRPKKTVA.

S60 is subject to Phosphoserine.

It belongs to the eukaryotic ribosomal protein eL28 family. In terms of assembly, component of the large ribosomal subunit (LSU). Mature yeast ribosomes consist of a small (40S) and a large (60S) subunit. The 40S small subunit contains 1 molecule of ribosomal RNA (18S rRNA) and at least 33 different proteins. The large 60S subunit contains 3 rRNA molecules (25S, 5.8S and 5S rRNA) and at least 46 different proteins.

The protein resides in the cytoplasm. Functionally, component of the ribosome, a large ribonucleoprotein complex responsible for the synthesis of proteins in the cell. The small ribosomal subunit (SSU) binds messenger RNAs (mRNAs) and translates the encoded message by selecting cognate aminoacyl-transfer RNA (tRNA) molecules. The large subunit (LSU) contains the ribosomal catalytic site termed the peptidyl transferase center (PTC), which catalyzes the formation of peptide bonds, thereby polymerizing the amino acids delivered by tRNAs into a polypeptide chain. The nascent polypeptides leave the ribosome through a tunnel in the LSU and interact with protein factors that function in enzymatic processing, targeting, and the membrane insertion of nascent chains at the exit of the ribosomal tunnel. This chain is Large ribosomal subunit protein eL28 (rpl44), found in Schizosaccharomyces pombe (strain 972 / ATCC 24843) (Fission yeast).